The sequence spans 167 residues: Epithelial membrane protein 2 (167 aa).

A helical transmembrane segment spans residues 1–21; that stretch reads MLVLLAFIIVFHITSAALLLV. N-linked (GlcNAc...) asparagine glycans are attached at residues Asn-44, Asn-47, and Asn-52. 3 helical membrane passes run 67 to 87, 95 to 115, and 143 to 163; these read TMILSTILCCIAFLIFLLQLF, FVLTSIIQLMACLCVMIAASI, and FILAWVAFAFTFISGLMYLIL.

Belongs to the PMP-22/EMP/MP20 family. As to quaternary structure, interacts with PTK2; regulates PTK2 activation and localization. Interacts with ITGB3; regulates the levels of the heterodimer ITGA5-ITGB3 integrin surface expression. Interacts with P2RX7 (via C-terminus). Interacts with ITGB1; the interaction may be direct or indirect and ITGB1 has a heterodimer form.

The protein resides in the golgi apparatus membrane. It localises to the cell membrane. It is found in the apical cell membrane. Its subcellular location is the membrane raft. The protein localises to the cytoplasm. The protein resides in the nucleus. It localises to the perinuclear region. Its function is as follows. Functions as a key regulator of cell membrane composition by regulating protein surface expression. Also, plays a role in regulation of processes including cell migration, cell proliferation, cell contraction and cell adhesion. Regulates transepithelial migration of neutrophils into the alveolar lumen, potentially via mediation of cell surface expression of adhesion markers and lipid raft formation. Negatively regulates caveolae formation by reducing CAV1 expression and CAV1 amount by increasing lysosomal degradation. Facilitates surface trafficking and the formation of lipid rafts bearing GPI-anchor proteins. Regulates surface expression of MHC1 and ICAM1 proteins increasing susceptibility to T-cell mediated cytotoxicity. Regulates the plasma membrane expression of the integrin heterodimers ITGA6-ITGB1, ITGA5-ITGB3 and ITGA5-ITGB1 resulting in modulation of cell-matrix adhesion. Also regulates many processes through PTK2. Regulates blood vessel endothelial cell migration and angiogenesis by regulating VEGF protein expression through PTK2 activation. Regulates cell migration and cell contraction through PTK2 and SRC activation. Regulates focal adhesion density, F-actin conformation and cell adhesion capacity through interaction with PTK2. Positively regulates cell proliferation. Plays a role during cell death and cell blebbing. Promotes angiogenesis and vasculogenesis through induction of VEGFA via a HIF1A-dependent pathway. Also plays a role in embryo implantation by regulating surface trafficking of integrin heterodimer ITGA5-ITGB3. Plays a role in placental angiogenesis and uterine natural killer cell regulation at the maternal-fetal placental interface, however not required in the maternal tissues for a viable pregnancy. Involved in the early stages of embryogenic development and cardiogenesis, potentially via regulation of epithelial-mesenchymal transition timing. May play a role in glomerular filtration. The protein is Epithelial membrane protein 2 (EMP2) of Bos taurus (Bovine).